The following is an 87-amino-acid chain: Sec-independent protein translocase protein TatA (87 aa).

Residues 3–23 (IFGIGLPEMIVILVVALLIFG) form a helical membrane-spanning segment. Residues 61-87 (EGVKVSTSASEPEKVVDVSSATNTNKN) are disordered.

It belongs to the TatA/E family. As to quaternary structure, forms a complex with TatC.

Its subcellular location is the cell inner membrane. Part of the twin-arginine translocation (Tat) system that transports large folded proteins containing a characteristic twin-arginine motif in their signal peptide across membranes. TatA could form the protein-conducting channel of the Tat system. The chain is Sec-independent protein translocase protein TatA from Trichodesmium erythraeum (strain IMS101).